Consider the following 116-residue polypeptide: MAEALGAQELYEKMFEQRFTANDKEYQEYLKREQDQPPIVEDWKMGNQRNTDRYRDNRHHRGWDGRQNWSSNSYNQSYGRGGWGNSYNQYRQDRHNYQQGHYTHNPSNQRFHSDRY.

The interaction with RNMT stretch occupies residues 1–55 (MAEALGAQELYEKMFEQRFTANDKEYQEYLKREQDQPPIVEDWKMGNQRNTDRYR). Residues 31–116 (KREQDQPPIV…SNQRFHSDRY (86 aa)) are disordered. Positions 36–42 (QPPIVED) match the RNMT-activating domain motif. The tract at residues 56 to 116 (DNRHHRGWDG…SNQRFHSDRY (61 aa)) is RNA-binding. Low complexity predominate over residues 67 to 78 (QNWSSNSYNQSY). The segment covering 97–110 (YQQGHYTHNPSNQR) has biased composition (polar residues).

The protein belongs to the RAM family.

The protein resides in the nucleus. In terms of biological role, regulatory subunit of the mRNA-capping methyltransferase RNMT:RAMAC complex that methylates the N7 position of the added guanosine to the 5'-cap structure of mRNAs. Promotes the recruitment of the methyl donor, S-adenosyl-L-methionine, to RNMT. Regulates RNMT expression by a post-transcriptional stabilizing mechanism. Binds RNA. The protein is RNA guanine-N7 methyltransferase activating subunit (ramac) of Xenopus tropicalis (Western clawed frog).